We begin with the raw amino-acid sequence, 272 residues long: Tryptophan synthase alpha chain (272 aa).

Catalysis depends on proton acceptor residues Glu-53 and Asp-64.

Belongs to the TrpA family. Tetramer of two alpha and two beta chains.

The enzyme catalyses (1S,2R)-1-C-(indol-3-yl)glycerol 3-phosphate + L-serine = D-glyceraldehyde 3-phosphate + L-tryptophan + H2O. Its pathway is amino-acid biosynthesis; L-tryptophan biosynthesis; L-tryptophan from chorismate: step 5/5. Its function is as follows. The alpha subunit is responsible for the aldol cleavage of indoleglycerol phosphate to indole and glyceraldehyde 3-phosphate. This Xanthomonas campestris pv. campestris (strain 8004) protein is Tryptophan synthase alpha chain.